A 321-amino-acid chain; its full sequence is Sphingolipid delta(4)-desaturase DES1 (321 aa).

6 helical membrane-spanning segments follow: residues 41–61 (PNFK…LFVV), 68–88 (WLIV…MLAV), 107–127 (ILGF…FKKY), 157–177 (FGKF…PLII), 187–206 (IINT…FLGW), and 208–230 (PLAY…GHFI).

Belongs to the fatty acid desaturase type 1 family. DEGS subfamily. As to expression, testes.

Its subcellular location is the endoplasmic reticulum membrane. The protein localises to the membrane. It localises to the mitochondrion. It carries out the reaction an N-acylsphinganine + 2 Fe(II)-[cytochrome b5] + O2 + 2 H(+) = an N-acylsphing-4-enine + 2 Fe(III)-[cytochrome b5] + 2 H2O. It catalyses the reaction an N-acyleicosasphinganine + 2 Fe(II)-[cytochrome b5] + O2 + 2 H(+) = an N-acyleicosasphing-4-enine + 2 Fe(III)-[cytochrome b5] + 2 H2O. It participates in sphingolipid metabolism. Has sphingolipid-delta-4-desaturase activity. Converts sphinganine-containing sphingolipids (such as N-acylsphinganines or dihydroceramides) into sphingolipids containing the delta-4-desaturated sphingoid base (E)-sphing-4-enine (such as N-acylsphing-4-enines or ceramides), which are required for many different functions (structural functions as well as signaling). Required to initiate spermatid differentiation among other signals. Required for central spindle assembly and cytokinesis during male meiosis, may act as part of an anchoring mechanism that links membrane-bounded cellular compartments to components of the cytoskeleton. This chain is Sphingolipid delta(4)-desaturase DES1, found in Drosophila melanogaster (Fruit fly).